A 511-amino-acid chain; its full sequence is DNA nucleotidylexotransferase (511 aa).

A disordered region spans residues 1–26; sequence MDPLQTAHAGPRKKRPRQTGASMAST. The Nuclear localization signal motif lies at 11–17; sequence PRKKRPR. Residues 27–124 enclose the BRCT domain; sequence PQDVRFQDLV…KPVETTGKHQ (98 aa). The residue at position 134 (serine 134) is a Phosphoserine. Residues 151 to 511 form a mediates interaction with DNTTIP2 region; the sequence is SQYACQRRTT…DYIEPSERNA (361 aa). The segment at 258 to 262 is involved in DNA binding; that stretch reads VGLKT. Residues 333 to 338 and 342 to 345 contribute to the a 2'-deoxyribonucleoside 5'-triphosphate site; these read GFRRGK and HDVD. Mg(2+)-binding residues include aspartate 343, aspartate 345, and aspartate 435. 450–451 lines the a 2'-deoxyribonucleoside 5'-triphosphate pocket; sequence GW.

It belongs to the DNA polymerase type-X family. In terms of assembly, interacts with PRP19 and DNTTIP1. Forms a ternary complex with DNTTIP2 and core histone. Released from this complex by PCNA. Interacts with TRERF1. Mg(2+) serves as cofactor.

Its subcellular location is the nucleus. The enzyme catalyses DNA(n) + a 2'-deoxyribonucleoside 5'-triphosphate = DNA(n+1) + diphosphate. In terms of biological role, template-independent DNA polymerase which catalyzes the random addition of deoxynucleoside 5'-triphosphate to the 3'-end of a DNA initiator. One of the in vivo functions of this enzyme is the addition of nucleotides at the junction (N region) of rearranged Ig heavy chain and T-cell receptor gene segments during the maturation of B- and T-cells. The sequence is that of DNA nucleotidylexotransferase (DNTT) from Eulemur macaco (Black lemur).